The chain runs to 968 residues: Sorting nexin-13 (968 aa).

Positions 97-284 constitute a PXA domain; sequence ANIIDEPLQQ…YVIWMIRDSN (188 aa). The RGS domain maps to 373–496; that stretch reads PLDSILVDNV…RKVYELMLRD (124 aa). Positions 570 to 691 constitute a PX domain; that stretch reads YADYDPYAVA…DFLENKAYSK (122 aa). A 1,2-diacyl-sn-glycero-3-phospho-(1D-myo-inositol-3-phosphate) is bound by residues R612, S614, K639, and R653.

This sequence belongs to the sorting nexin family.

The protein resides in the early endosome membrane. In terms of biological role, may be involved in several stages of intracellular trafficking. May play a role in endosome homeostasis. Acts as a GAP for Galphas. The sequence is that of Sorting nexin-13 (SNX13) from Homo sapiens (Human).